The sequence spans 155 residues: uncharacterized protein (155 aa).

2 consecutive transmembrane segments (helical) span residues 33–53 and 83–103; these read ITLL…LFLL and IGAV…GIWV.

To E.coli YdgK.

The protein resides in the cell membrane. This is an uncharacterized protein from Synechocystis sp. (strain ATCC 27184 / PCC 6803 / Kazusa).